A 373-amino-acid polypeptide reads, in one-letter code: WAT1-related protein At4g30420 (373 aa).

Transmembrane regions (helical) follow at residues Ala2 to Val22, Val29 to Ser49, Ile55 to Gly75, Met94 to Gly114, Gly125 to Leu145, Trp173 to Leu193, Leu205 to Phe225, Cys244 to Ala264, Phe270 to Phe290, and Ile294 to Trp314. EamA domains are found at residues Cys9 to Cys135 and Cys186 to Leu313.

It belongs to the drug/metabolite transporter (DMT) superfamily. Plant drug/metabolite exporter (P-DME) (TC 2.A.7.4) family.

The protein localises to the membrane. The protein is WAT1-related protein At4g30420 of Arabidopsis thaliana (Mouse-ear cress).